We begin with the raw amino-acid sequence, 306 residues long: 4-hydroxy-3-methylbut-2-enyl diphosphate reductase (306 aa).

Cys-12 provides a ligand contact to [4Fe-4S] cluster. (2E)-4-hydroxy-3-methylbut-2-enyl diphosphate-binding residues include His-41 and His-74. Residues His-41 and His-74 each coordinate dimethylallyl diphosphate. Residues His-41 and His-74 each contribute to the isopentenyl diphosphate site. [4Fe-4S] cluster is bound at residue Cys-96. Position 124 (His-124) interacts with (2E)-4-hydroxy-3-methylbut-2-enyl diphosphate. Dimethylallyl diphosphate is bound at residue His-124. Isopentenyl diphosphate is bound at residue His-124. The Proton donor role is filled by Glu-126. Residue Thr-164 participates in (2E)-4-hydroxy-3-methylbut-2-enyl diphosphate binding. Cys-194 lines the [4Fe-4S] cluster pocket. (2E)-4-hydroxy-3-methylbut-2-enyl diphosphate contacts are provided by Ser-222, Ser-223, Asn-224, and Ser-266. Dimethylallyl diphosphate is bound by residues Ser-222, Ser-223, Asn-224, and Ser-266. Isopentenyl diphosphate-binding residues include Ser-222, Ser-223, Asn-224, and Ser-266.

Belongs to the IspH family. The cofactor is [4Fe-4S] cluster.

The enzyme catalyses isopentenyl diphosphate + 2 oxidized [2Fe-2S]-[ferredoxin] + H2O = (2E)-4-hydroxy-3-methylbut-2-enyl diphosphate + 2 reduced [2Fe-2S]-[ferredoxin] + 2 H(+). It catalyses the reaction dimethylallyl diphosphate + 2 oxidized [2Fe-2S]-[ferredoxin] + H2O = (2E)-4-hydroxy-3-methylbut-2-enyl diphosphate + 2 reduced [2Fe-2S]-[ferredoxin] + 2 H(+). It participates in isoprenoid biosynthesis; dimethylallyl diphosphate biosynthesis; dimethylallyl diphosphate from (2E)-4-hydroxy-3-methylbutenyl diphosphate: step 1/1. It functions in the pathway isoprenoid biosynthesis; isopentenyl diphosphate biosynthesis via DXP pathway; isopentenyl diphosphate from 1-deoxy-D-xylulose 5-phosphate: step 6/6. Catalyzes the conversion of 1-hydroxy-2-methyl-2-(E)-butenyl 4-diphosphate (HMBPP) into a mixture of isopentenyl diphosphate (IPP) and dimethylallyl diphosphate (DMAPP). Acts in the terminal step of the DOXP/MEP pathway for isoprenoid precursor biosynthesis. In Dechloromonas aromatica (strain RCB), this protein is 4-hydroxy-3-methylbut-2-enyl diphosphate reductase.